Reading from the N-terminus, the 88-residue chain is Protein K3 (88 aa).

Positions 8–82 constitute an S1 motif domain; that stretch reads LPNAGDVIKG…TKGYIDVNYK (75 aa). 2 binding to host EIF2AK2/PKR regions span residues 43–53 and 74–79; these read SVKMHMDRYVE and KGYIDV.

This sequence belongs to the orthopoxvirus OPG041 family. In terms of assembly, interacts with host EIF2AK2/PKR kinase.

In terms of biological role, viral mimic of eIF-2-alpha that acts as a pseudosubstrate for EIF2AK2/PKR kinase. Inhibits therefore eIF-2-alpha phosphorylation by host EIF2AK2/PKR kinase and prevents protein synthesis shutoff. Determinant of host species specificity. The chain is Protein K3 (OPG041) from Homo sapiens (Human).